The sequence spans 389 residues: Phospho-N-acetylmuramoyl-pentapeptide-transferase (389 aa).

10 helical membrane-spanning segments follow: residues 25 to 45 (RAVM…PWVI), 73 to 93 (TMGG…WGDL), 97 to 117 (FIWI…VDDY), 135 to 155 (FWQS…VSEA), 190 to 210 (ISYP…IVGA), 222 to 242 (GLVI…AYVM), 258 to 278 (GAGE…AFLW), 286 to 306 (VFMG…VAVI), 311 to 331 (IVLF…MLQV), and 366 to 386 (QVVV…LSTL).

It belongs to the glycosyltransferase 4 family. MraY subfamily. The cofactor is Mg(2+).

The protein localises to the cell inner membrane. It carries out the reaction UDP-N-acetyl-alpha-D-muramoyl-L-alanyl-gamma-D-glutamyl-meso-2,6-diaminopimeloyl-D-alanyl-D-alanine + di-trans,octa-cis-undecaprenyl phosphate = di-trans,octa-cis-undecaprenyl diphospho-N-acetyl-alpha-D-muramoyl-L-alanyl-D-glutamyl-meso-2,6-diaminopimeloyl-D-alanyl-D-alanine + UMP. The protein operates within cell wall biogenesis; peptidoglycan biosynthesis. Catalyzes the initial step of the lipid cycle reactions in the biosynthesis of the cell wall peptidoglycan: transfers peptidoglycan precursor phospho-MurNAc-pentapeptide from UDP-MurNAc-pentapeptide onto the lipid carrier undecaprenyl phosphate, yielding undecaprenyl-pyrophosphoryl-MurNAc-pentapeptide, known as lipid I. This is Phospho-N-acetylmuramoyl-pentapeptide-transferase from Burkholderia pseudomallei (strain 1106a).